A 297-amino-acid polypeptide reads, in one-letter code: N-acetylneuraminate lyase (297 aa).

Aceneuramate contacts are provided by Ser47 and Thr48. Tyr137 (proton donor) is an active-site residue. Residue Lys165 is the Schiff-base intermediate with substrate of the active site. 5 residues coordinate aceneuramate: Thr167, Gly189, Asp191, Glu192, and Ser208.

The protein belongs to the DapA family. NanA subfamily. Homotetramer.

Its subcellular location is the cytoplasm. It carries out the reaction aceneuramate = aldehydo-N-acetyl-D-mannosamine + pyruvate. It functions in the pathway amino-sugar metabolism; N-acetylneuraminate degradation; D-fructose 6-phosphate from N-acetylneuraminate: step 1/5. In terms of biological role, catalyzes the reversible aldol cleavage of N-acetylneuraminic acid (sialic acid; Neu5Ac) to form pyruvate and N-acetylmannosamine (ManNAc) via a Schiff base intermediate. The chain is N-acetylneuraminate lyase from Escherichia coli (strain SMS-3-5 / SECEC).